The primary structure comprises 135 residues: Small ribosomal subunit protein uS8 (135 aa).

This sequence belongs to the universal ribosomal protein uS8 family. In terms of assembly, part of the 30S ribosomal subunit. Contacts proteins S5 and S12.

Its function is as follows. One of the primary rRNA binding proteins, it binds directly to 16S rRNA central domain where it helps coordinate assembly of the platform of the 30S subunit. This chain is Small ribosomal subunit protein uS8, found in Salinispora arenicola (strain CNS-205).